The sequence spans 1339 residues: Inhibitor of Bruton tyrosine kinase (1339 aa).

ANK repeat units lie at residues 51–81 (FGRN…DLAV), 86–115 (SGWT…NLYI), and 119–154 (DGYT…NVNF). RCC1 repeat units follow at residues 142–195 (PTEL…FLSQ), 196–247 (KGQV…VLTE), and 249–302 (GYVY…LWTK). One can recognise a BTB 1 domain in the interval 555–636 (HDVTFQVGTK…IYSDTCDMLL (82 aa)). Residues 685–704 (EKQKGKTKQSKKTRSIGDET) form a disordered region. The span at 689–698 (GKTKQSKKTR) shows a compositional bias: basic residues. The region spanning 758-826 (YDVMMKSEDG…IYTDEVLTVK (69 aa)) is the BTB 2 domain. Basic residues predominate over residues 970-980 (SKAKPKKKQRK). 3 disordered regions span residues 970–993 (SKAK…LSDI), 1058–1089 (RSSP…SRIT), and 1208–1237 (FPSL…SGTL). Residues 1214-1231 (DVKKSKHTEELDPSELAR) are compositionally biased toward basic and acidic residues.

Its subcellular location is the cytoplasm. It is found in the membrane. Its function is as follows. Acts as an inhibitor of BTK tyrosine kinase activity, thereby playing a role in B-cell development. This is Inhibitor of Bruton tyrosine kinase (ibtk) from Xenopus laevis (African clawed frog).